The chain runs to 401 residues: Probable N-acetyl-gamma-glutamyl-phosphate reductase, chloroplastic (401 aa).

Residues 1-48 (MSTASAFSSIQGCWFKGERKIRVADKRAKRLTLGSHVASPSSMSFRVS) constitute a chloroplast transit peptide. Cys205 is an active-site residue.

Belongs to the NAGSA dehydrogenase family. Type 1 subfamily. In terms of assembly, homotetramer.

It is found in the plastid. Its subcellular location is the chloroplast. It catalyses the reaction N-acetyl-L-glutamate 5-semialdehyde + phosphate + NADP(+) = N-acetyl-L-glutamyl 5-phosphate + NADPH + H(+). The protein operates within amino-acid biosynthesis; L-arginine biosynthesis; N(2)-acetyl-L-ornithine from L-glutamate: step 3/4. The polypeptide is Probable N-acetyl-gamma-glutamyl-phosphate reductase, chloroplastic (Arabidopsis thaliana (Mouse-ear cress)).